The primary structure comprises 461 residues: General transcription and DNA repair factor IIH subunit SSL1 (461 aa).

Positions 1 to 70 are disordered; that stretch reads MAPVVISESE…RLSNRNLQGS (70 aa). Residues 26–37 are compositionally biased toward basic and acidic residues; it reads VHFDGEGDDRVD. Residues 53 to 63 are compositionally biased toward basic residues; it reads HVQRKKKKRLS. The VWFA domain maps to 125–304; the sequence is SLILTLDCSE…THLKELFNEA (180 aa). The C4-type zinc-finger motif lies at 349 to 366; that stretch reads CPNCHSKVCSLPTVCPCC.

The protein belongs to the GTF2H2 family. As to quaternary structure, component of the 7-subunit TFIIH core complex composed of XPB/SSL2, XPD/RAD3, SSL1, TFB1, TFB2, TFB4 and TFB5, which is active in NER. The core complex associates with the 3-subunit CTD-kinase module TFIIK composed of CCL1, KIN28 and TFB3 to form the 10-subunit holoenzyme (holo-TFIIH) active in transcription. An additionnal subunit, TFB6, plays a role in the dissociation of the SSL2 helicase from TFIIH after transcription initiation.

It localises to the nucleus. In terms of biological role, component of the general transcription and DNA repair factor IIH (TFIIH) core complex, which is involved in general and transcription-coupled nucleotide excision repair (NER) of damaged DNA and, when complexed to TFIIK, in RNA transcription by RNA polymerase II. In NER, TFIIH acts by opening DNA around the lesion to allow the excision of the damaged oligonucleotide and its replacement by a new DNA fragment. In transcription, TFIIH has an essential role in transcription initiation. When the pre-initiation complex (PIC) has been established, TFIIH is required for promoter opening and promoter escape. Phosphorylation of the C-terminal tail (CTD) of the largest subunit of RNA polymerase II by the kinase module TFIIK controls the initiation of transcription. This chain is General transcription and DNA repair factor IIH subunit SSL1 (SSL1), found in Saccharomyces cerevisiae (strain ATCC 204508 / S288c) (Baker's yeast).